The primary structure comprises 556 residues: 2-succinyl-5-enolpyruvyl-6-hydroxy-3-cyclohexene-1-carboxylate synthase (556 aa).

It belongs to the TPP enzyme family. MenD subfamily. In terms of assembly, homodimer. It depends on Mg(2+) as a cofactor. The cofactor is Mn(2+). Thiamine diphosphate serves as cofactor.

It catalyses the reaction isochorismate + 2-oxoglutarate + H(+) = 5-enolpyruvoyl-6-hydroxy-2-succinyl-cyclohex-3-ene-1-carboxylate + CO2. It participates in quinol/quinone metabolism; 1,4-dihydroxy-2-naphthoate biosynthesis; 1,4-dihydroxy-2-naphthoate from chorismate: step 2/7. Its pathway is quinol/quinone metabolism; menaquinone biosynthesis. In terms of biological role, catalyzes the thiamine diphosphate-dependent decarboxylation of 2-oxoglutarate and the subsequent addition of the resulting succinic semialdehyde-thiamine pyrophosphate anion to isochorismate to yield 2-succinyl-5-enolpyruvyl-6-hydroxy-3-cyclohexene-1-carboxylate (SEPHCHC). This is 2-succinyl-5-enolpyruvyl-6-hydroxy-3-cyclohexene-1-carboxylate synthase from Salmonella paratyphi A (strain AKU_12601).